Reading from the N-terminus, the 653-residue chain is ATP-dependent zinc metalloprotease FtsH 1 (653 aa).

Residues 1–8 lie on the Cytoplasmic side of the membrane; it reads MAENKWLR. A helical membrane pass occupies residues 9–29; the sequence is NGFVWIVLIIAVVALWVTFMK. Residues 30-110 are Extracellular-facing; the sequence is DGGSAREENF…RVNPASQWGN (81 aa). The chain crosses the membrane as a helical span at residues 111 to 131; it reads WLSALTFILPTLFLIGIVIFM. Residues 132 to 653 are Cytoplasmic-facing; sequence MRQAQGTNNQ…SPTMRPQPAS (522 aa). 203–210 provides a ligand contact to ATP; sequence GPPGTGKT. Histidine 425 is a binding site for Zn(2+). Glutamate 426 is an active-site residue. Zn(2+) is bound by residues histidine 429 and aspartate 501. The tract at residues 604-653 is disordered; sequence EPRPRPQLVGPPVTRPAALAHKTEEADRGGERSPHPQPHPSPTMRPQPAS. Basic and acidic residues predominate over residues 624–637; sequence HKTEEADRGGERSP. Residues 638–653 are compositionally biased toward pro residues; the sequence is HPQPHPSPTMRPQPAS.

In the central section; belongs to the AAA ATPase family. This sequence in the C-terminal section; belongs to the peptidase M41 family. Homohexamer. The cofactor is Zn(2+).

The protein resides in the cell membrane. In terms of biological role, acts as a processive, ATP-dependent zinc metallopeptidase for both cytoplasmic and membrane proteins. Plays a role in the quality control of integral membrane proteins. The polypeptide is ATP-dependent zinc metalloprotease FtsH 1 (Sphaerobacter thermophilus (strain ATCC 49802 / DSM 20745 / KCCM 41009 / NCIMB 13125 / S 6022)).